The sequence spans 501 residues: Lysine--tRNA ligase (501 aa).

Mg(2+)-binding residues include E402 and E409.

Belongs to the class-II aminoacyl-tRNA synthetase family. As to quaternary structure, homodimer. Mg(2+) is required as a cofactor.

The protein localises to the cytoplasm. The enzyme catalyses tRNA(Lys) + L-lysine + ATP = L-lysyl-tRNA(Lys) + AMP + diphosphate. The sequence is that of Lysine--tRNA ligase from Helicobacter pylori (strain P12).